The chain runs to 702 residues: Methionine--tRNA ligase (702 aa).

The 'HIGH' region motif lies at 14–24 (PYANGPVHLGH). Residues C146, C149, C159, and C162 each contribute to the Zn(2+) site. The 'KMSKS' region signature appears at 344–348 (KFSKS). K347 is an ATP binding site. Positions 601-702 (DFQKVDLRVA…GEKINGQSVQ (102 aa)) constitute a tRNA-binding domain.

It belongs to the class-I aminoacyl-tRNA synthetase family. MetG type 1 subfamily. In terms of assembly, homodimer. Zn(2+) serves as cofactor.

It localises to the cytoplasm. The catalysed reaction is tRNA(Met) + L-methionine + ATP = L-methionyl-tRNA(Met) + AMP + diphosphate. Is required not only for elongation of protein synthesis but also for the initiation of all mRNA translation through initiator tRNA(fMet) aminoacylation. The polypeptide is Methionine--tRNA ligase (Chlorobium luteolum (strain DSM 273 / BCRC 81028 / 2530) (Pelodictyon luteolum)).